The primary structure comprises 513 residues: ATP synthase subunit alpha 1 (513 aa).

ATP is bound at residue 169–176 (GDRQTGKT).

The protein belongs to the ATPase alpha/beta chains family. As to quaternary structure, F-type ATPases have 2 components, CF(1) - the catalytic core - and CF(0) - the membrane proton channel. CF(1) has five subunits: alpha(3), beta(3), gamma(1), delta(1), epsilon(1). CF(0) has three main subunits: a(1), b(2) and c(9-12). The alpha and beta chains form an alternating ring which encloses part of the gamma chain. CF(1) is attached to CF(0) by a central stalk formed by the gamma and epsilon chains, while a peripheral stalk is formed by the delta and b chains.

The protein resides in the cell inner membrane. It catalyses the reaction ATP + H2O + 4 H(+)(in) = ADP + phosphate + 5 H(+)(out). Functionally, produces ATP from ADP in the presence of a proton gradient across the membrane. The alpha chain is a regulatory subunit. This is ATP synthase subunit alpha 1 from Nitrosomonas eutropha (strain DSM 101675 / C91 / Nm57).